A 487-amino-acid polypeptide reads, in one-letter code: Probable cytochrome P450 513B1 (487 aa).

A helical transmembrane segment spans residues 1 to 18; the sequence is MNLLVLSVILAIIIYLIF. Heme is bound at residue Cys433.

Belongs to the cytochrome P450 family. The cofactor is heme.

The protein localises to the membrane. The sequence is that of Probable cytochrome P450 513B1 (cyp513B1) from Dictyostelium discoideum (Social amoeba).